A 221-amino-acid chain; its full sequence is Alpha-ketoglutarate-dependent dioxygenase alkB homolog 7, mitochondrial (221 aa).

The N-terminal 23 residues, 1-23, are a transit peptide targeting the mitochondrion; the sequence is MAGGGQVVLRTLSQQGWVRGSGA. Residues histidine 121 and aspartate 123 each contribute to the Fe cation site. Tyrosine 165 provides a ligand contact to 2-oxoglutarate. Histidine 177 serves as a coordination point for Fe cation. 2-oxoglutarate contacts are provided by residues 197 to 199 and arginine 203; that span reads RIS.

The protein belongs to the alkB family. Fe(2+) is required as a cofactor.

The protein resides in the mitochondrion matrix. Functionally, may function as protein hydroxylase; can catalyze auto-hydroxylation at Leu-110 (in vitro), but this activity may be due to the absence of the true substrate. Required to induce programmed necrosis in response to DNA damage caused by cytotoxic alkylating agents. Acts by triggering the collapse of mitochondrial membrane potential and loss of mitochondrial function that leads to energy depletion and cell death. ALKBH7-mediated necrosis is probably required to prevent the accumulation of cells with DNA damage. Does not display DNA demethylase activity. Involved in fatty acid metabolism. The chain is Alpha-ketoglutarate-dependent dioxygenase alkB homolog 7, mitochondrial (ALKBH7) from Bos taurus (Bovine).